The chain runs to 482 residues: tRNA sulfurtransferase (482 aa).

Residues Leu61–Arg165 form the THUMP domain. Residues Leu183–Ile184, Lys265, Gly287, and Gln296 contribute to the ATP site. A disulfide bond links Cys344 and Cys456. In terms of domain architecture, Rhodanese spans Phe404–Pro482. Cys456 (cysteine persulfide intermediate) is an active-site residue.

Belongs to the ThiI family.

The protein localises to the cytoplasm. It carries out the reaction [ThiI sulfur-carrier protein]-S-sulfanyl-L-cysteine + a uridine in tRNA + 2 reduced [2Fe-2S]-[ferredoxin] + ATP + H(+) = [ThiI sulfur-carrier protein]-L-cysteine + a 4-thiouridine in tRNA + 2 oxidized [2Fe-2S]-[ferredoxin] + AMP + diphosphate. The catalysed reaction is [ThiS sulfur-carrier protein]-C-terminal Gly-Gly-AMP + S-sulfanyl-L-cysteinyl-[cysteine desulfurase] + AH2 = [ThiS sulfur-carrier protein]-C-terminal-Gly-aminoethanethioate + L-cysteinyl-[cysteine desulfurase] + A + AMP + 2 H(+). It participates in cofactor biosynthesis; thiamine diphosphate biosynthesis. Catalyzes the ATP-dependent transfer of a sulfur to tRNA to produce 4-thiouridine in position 8 of tRNAs, which functions as a near-UV photosensor. Also catalyzes the transfer of sulfur to the sulfur carrier protein ThiS, forming ThiS-thiocarboxylate. This is a step in the synthesis of thiazole, in the thiamine biosynthesis pathway. The sulfur is donated as persulfide by IscS. The chain is tRNA sulfurtransferase from Salmonella enteritidis PT4 (strain P125109).